The primary structure comprises 197 residues: Phosphoheptose isomerase (197 aa).

The SIS domain maps to 34–192 (MVNALINGNK…CEGVDDCLFP (159 aa)). Substrate is bound by residues 49-51 (NGG), glutamine 62, 91-92 (ND), serine 122, and histidine 172. Glutamine 62 serves as a coordination point for Zn(2+). Zn(2+) is bound by residues histidine 172 and histidine 180.

It belongs to the SIS family. GmhA subfamily. Homotetramer. It depends on Zn(2+) as a cofactor.

It is found in the cytoplasm. It catalyses the reaction 2 D-sedoheptulose 7-phosphate = D-glycero-alpha-D-manno-heptose 7-phosphate + D-glycero-beta-D-manno-heptose 7-phosphate. The protein operates within carbohydrate biosynthesis; D-glycero-D-manno-heptose 7-phosphate biosynthesis; D-glycero-alpha-D-manno-heptose 7-phosphate and D-glycero-beta-D-manno-heptose 7-phosphate from sedoheptulose 7-phosphate: step 1/1. In terms of biological role, catalyzes the isomerization of sedoheptulose 7-phosphate in D-glycero-D-manno-heptose 7-phosphate. The chain is Phosphoheptose isomerase from Pseudoalteromonas atlantica (strain T6c / ATCC BAA-1087).